Here is a 39-residue protein sequence, read N- to C-terminus: Photosystem II reaction center protein X (39 aa).

Residues 10–30 (WSLVLGAAIVLIPATIGLIFI) form a helical membrane-spanning segment.

The protein belongs to the PsbX family. Type 1 subfamily. As to quaternary structure, PSII is composed of 1 copy each of membrane proteins PsbA, PsbB, PsbC, PsbD, PsbE, PsbF, PsbH, PsbI, PsbJ, PsbK, PsbL, PsbM, PsbT, PsbX, PsbY, PsbZ, Psb30/Ycf12, peripheral proteins PsbO, CyanoQ (PsbQ), PsbU, PsbV and a large number of cofactors. It forms dimeric complexes.

The protein resides in the cellular thylakoid membrane. In terms of biological role, involved in the binding and/or turnover of quinones at the Q(B) site of photosystem II (PSII). PSII is a light-driven water plastoquinone oxidoreductase, using light energy to abstract electrons from H(2)O, generating a proton gradient subsequently used for ATP formation. This Microcystis aeruginosa (strain NIES-843 / IAM M-2473) protein is Photosystem II reaction center protein X.